Reading from the N-terminus, the 209-residue chain is Thymidylate kinase (209 aa).

10–17 (GPDGAGKT) provides a ligand contact to ATP.

The protein belongs to the thymidylate kinase family.

It carries out the reaction dTMP + ATP = dTDP + ADP. Its function is as follows. Phosphorylation of dTMP to form dTDP in both de novo and salvage pathways of dTTP synthesis. This chain is Thymidylate kinase, found in Pediococcus pentosaceus (strain ATCC 25745 / CCUG 21536 / LMG 10740 / 183-1w).